The primary structure comprises 137 residues: Large ribosomal subunit protein bL17 (137 aa).

The protein belongs to the bacterial ribosomal protein bL17 family. In terms of assembly, part of the 50S ribosomal subunit. Contacts protein L32.

The polypeptide is Large ribosomal subunit protein bL17 (Rickettsia typhi (strain ATCC VR-144 / Wilmington)).